Reading from the N-terminus, the 424-residue chain is Histidine--tRNA ligase (424 aa).

It belongs to the class-II aminoacyl-tRNA synthetase family. In terms of assembly, homodimer.

The protein localises to the cytoplasm. The catalysed reaction is tRNA(His) + L-histidine + ATP = L-histidyl-tRNA(His) + AMP + diphosphate + H(+). The sequence is that of Histidine--tRNA ligase from Escherichia coli (strain SE11).